The following is a 96-amino-acid chain: uncharacterized protein (96 aa).

Transmembrane regions (helical) follow at residues 14–34 (FIEGMSLLILLFIAMPLKYWA), 38–58 (LAVTIVGSVHGGLFILYLLVL), and 67–87 (WPLKWSAAGFIAAFVPFGNFL).

It localises to the cell membrane. This is an uncharacterized protein from Bacillus subtilis (strain 168).